The primary structure comprises 285 residues: 3-methyl-2-oxobutanoate hydroxymethyltransferase 1 (285 aa).

Aspartate 49 and aspartate 88 together coordinate Mg(2+). Residues 49-50 (DS), aspartate 88, and lysine 118 contribute to the 3-methyl-2-oxobutanoate site. Residue glutamate 120 participates in Mg(2+) binding. Glutamate 187 serves as the catalytic Proton acceptor.

This sequence belongs to the PanB family. As to quaternary structure, homodecamer; pentamer of dimers. It depends on Mg(2+) as a cofactor.

Its subcellular location is the cytoplasm. The catalysed reaction is 3-methyl-2-oxobutanoate + (6R)-5,10-methylene-5,6,7,8-tetrahydrofolate + H2O = 2-dehydropantoate + (6S)-5,6,7,8-tetrahydrofolate. The protein operates within cofactor biosynthesis; (R)-pantothenate biosynthesis; (R)-pantoate from 3-methyl-2-oxobutanoate: step 1/2. Catalyzes the reversible reaction in which hydroxymethyl group from 5,10-methylenetetrahydrofolate is transferred onto alpha-ketoisovalerate to form ketopantoate. In Burkholderia lata (strain ATCC 17760 / DSM 23089 / LMG 22485 / NCIMB 9086 / R18194 / 383), this protein is 3-methyl-2-oxobutanoate hydroxymethyltransferase 1.